The primary structure comprises 213 residues: 3-isopropylmalate dehydratase small subunit (213 aa).

This sequence belongs to the LeuD family. LeuD type 1 subfamily. Heterodimer of LeuC and LeuD.

It catalyses the reaction (2R,3S)-3-isopropylmalate = (2S)-2-isopropylmalate. It participates in amino-acid biosynthesis; L-leucine biosynthesis; L-leucine from 3-methyl-2-oxobutanoate: step 2/4. Its function is as follows. Catalyzes the isomerization between 2-isopropylmalate and 3-isopropylmalate, via the formation of 2-isopropylmaleate. The polypeptide is 3-isopropylmalate dehydratase small subunit (Neisseria meningitidis serogroup B (strain ATCC BAA-335 / MC58)).